Consider the following 876-residue polypeptide: Alanine--tRNA ligase (876 aa).

4 residues coordinate Zn(2+): His562, His566, Cys666, and His670.

This sequence belongs to the class-II aminoacyl-tRNA synthetase family. The cofactor is Zn(2+).

Its subcellular location is the cytoplasm. The enzyme catalyses tRNA(Ala) + L-alanine + ATP = L-alanyl-tRNA(Ala) + AMP + diphosphate. Catalyzes the attachment of alanine to tRNA(Ala) in a two-step reaction: alanine is first activated by ATP to form Ala-AMP and then transferred to the acceptor end of tRNA(Ala). Also edits incorrectly charged Ser-tRNA(Ala) and Gly-tRNA(Ala) via its editing domain. This chain is Alanine--tRNA ligase, found in Marinobacter nauticus (strain ATCC 700491 / DSM 11845 / VT8) (Marinobacter aquaeolei).